Reading from the N-terminus, the 411-residue chain is Tyrosine--tRNA ligase (411 aa).

Residue Tyr34 coordinates L-tyrosine. Residues 39–48 (CTATSLHIGS) carry the 'HIGH' region motif. Residues Tyr171 and Gln175 each contribute to the L-tyrosine site. The 'KMSKS' region signature appears at 231–235 (KMGKT). Lys234 lines the ATP pocket. The S4 RNA-binding domain maps to 345–411 (ISAYNLFYNA…GKKRHILVKV (67 aa)).

This sequence belongs to the class-I aminoacyl-tRNA synthetase family. TyrS type 1 subfamily. Homodimer.

It localises to the cytoplasm. The enzyme catalyses tRNA(Tyr) + L-tyrosine + ATP = L-tyrosyl-tRNA(Tyr) + AMP + diphosphate + H(+). Functionally, catalyzes the attachment of tyrosine to tRNA(Tyr) in a two-step reaction: tyrosine is first activated by ATP to form Tyr-AMP and then transferred to the acceptor end of tRNA(Tyr). This Rickettsia prowazekii (strain Madrid E) protein is Tyrosine--tRNA ligase.